Reading from the N-terminus, the 195-residue chain is BAG family molecular chaperone regulator 1A (195 aa).

The Ubiquitin-like domain occupies 6–72 (STVTIHYGNQ…KLGLKNHSKI (67 aa)). The interval 78–98 (HKQQRGSKEKDTVEPAPKAEA) is disordered. Residues 83 to 98 (GSKEKDTVEPAPKAEA) are compositionally biased toward basic and acidic residues. The BAG domain occupies 109-190 (EIKAIDQYVD…KMLDHVDQTS (82 aa)).

As to quaternary structure, binds to the ATPase domain of HSP70/HSC chaperones.

In terms of biological role, inhibits the chaperone activity of HSP70/HSC70 by promoting substrate release. The protein is BAG family molecular chaperone regulator 1A (bag101) of Schizosaccharomyces pombe (strain 972 / ATCC 24843) (Fission yeast).